A 367-amino-acid polypeptide reads, in one-letter code: Alanine racemase (367 aa).

Catalysis depends on Lys-40, which acts as the Proton acceptor; specific for D-alanine. The residue at position 40 (Lys-40) is an N6-(pyridoxal phosphate)lysine. Arg-136 contributes to the substrate binding site. Tyr-263 functions as the Proton acceptor; specific for L-alanine in the catalytic mechanism. A substrate-binding site is contributed by Met-310.

It belongs to the alanine racemase family. The cofactor is pyridoxal 5'-phosphate.

It catalyses the reaction L-alanine = D-alanine. The protein operates within amino-acid biosynthesis; D-alanine biosynthesis; D-alanine from L-alanine: step 1/1. Its function is as follows. Catalyzes the interconversion of L-alanine and D-alanine. May also act on other amino acids. This is Alanine racemase (alr) from Streptococcus pneumoniae (strain Taiwan19F-14).